The primary structure comprises 354 residues: Magnesium-protoporphyrin IX monomethyl ester [oxidative] cyclase 2 (354 aa).

The protein belongs to the AcsF family. It depends on Fe cation as a cofactor.

The enzyme catalyses Mg-protoporphyrin IX 13-monomethyl ester + 3 NADPH + 3 O2 + 2 H(+) = 3,8-divinyl protochlorophyllide a + 3 NADP(+) + 5 H2O. It participates in porphyrin-containing compound metabolism; chlorophyll biosynthesis (light-independent). Catalyzes the formation of the isocyclic ring in chlorophyll biosynthesis. Mediates the cyclase reaction, which results in the formation of divinylprotochlorophyllide (Pchlide) characteristic of all chlorophylls from magnesium-protoporphyrin IX 13-monomethyl ester (MgPMME). The chain is Magnesium-protoporphyrin IX monomethyl ester [oxidative] cyclase 2 from Thermosynechococcus vestitus (strain NIES-2133 / IAM M-273 / BP-1).